Consider the following 495-residue polypeptide: 2-carboxy-D-arabinitol-1-phosphatase (495 aa).

Pro residues predominate over residues 1–12; that stretch reads MLLFAPTPPPSP. Residues 1-23 form a disordered region; the sequence is MLLFAPTPPPSPATAHRRPGGSA. Residues 1-50 constitute a chloroplast transit peptide; the sequence is MLLFAPTPPPSPATAHRRPGGSAASCIRCSSVRELDRSPSRPPLPPLAEA. The Tele-phosphohistidine intermediate role is filled by H58. E132 serves as the catalytic Proton donor/acceptor.

The protein belongs to the phosphoglycerate mutase family.

The protein resides in the plastid. The protein localises to the chloroplast stroma. It catalyses the reaction 2-carboxy-D-arabinitol 1-phosphate + H2O = 2-carboxy-D-arabinitol + phosphate. Its activity is regulated as follows. Inactivated by oxidized glutathione (GSSG) at pH 8.0. Functionally, phosphoglycerate mutase-like protein lacking PGM activity, but having 2-carboxy-D-arabinitol 1-phosphate (CA1P) phosphatase activity. Can dephosphorylate the closely related compounds 2-carboxy-D-arabinitol 1,5-bisphosphate (CABP) and 2-carboxy-D-ribitol-1,5-bisphosphate(CRBP), and 2,3-diphosphoglycerate. Prevents the accumulation of D-glycero-2,3-pentodiulose-1,5-bisphosphate (PDBP) a potent inhibitor of ribulose-1,5-bisphosphate carboxylase (RuBisCO). PDBP is produced during the oxidation of ribulose-1,5-bisphosphate, the substrate of RuBisCO. This chain is 2-carboxy-D-arabinitol-1-phosphatase, found in Triticum aestivum (Wheat).